A 419-amino-acid polypeptide reads, in one-letter code: [Butirosin acyl-carrier protein]--L-glutamate ligase (419 aa).

Residues 144 to 345 enclose the ATP-grasp domain; that stretch reads RRLMERNGFN…FVESRVLVFN (202 aa). ATP is bound at residue 174 to 231; the sequence is ISAGFSKCVLKVPYGSSGKGLKVIDNERNFRFLLNYIQNRQTNVDLLLEGWHPHRLSL. 3 residues coordinate Mg(2+): Asp-298, Glu-312, and Asn-314. Mn(2+)-binding residues include Asp-298, Glu-312, and Asn-314.

Monomer. Mg(2+) is required as a cofactor. The cofactor is Mn(2+).

It carries out the reaction holo-[BtrI ACP] + L-glutamate + ATP = gamma-L-glutamyl-[BtrI ACP] + ADP + phosphate. The catalysed reaction is 4-aminobutanoyl-[BtrI ACP] + L-glutamate + ATP = 4-(gamma-L-glutamylamino)butanoyl-[BtrI ACP] + ADP + phosphate + H(+). The protein operates within antibiotic biosynthesis; butirosin biosynthesis. In terms of biological role, ATP-dependent ligase that catalyzes 2 steps in the biosynthesis of the side chain of the aminoglycoside antibiotics in the biosynthetic pathway of butirosin. Mediates the addition of one molecule of L-glutamate to a dedicated acyl-carrier protein. Following decarboxylation of the product by BtrK, adds a second L-glutamate molecule. This is [Butirosin acyl-carrier protein]--L-glutamate ligase (btrJ) from Niallia circulans (Bacillus circulans).